Here is a 430-residue protein sequence, read N- to C-terminus: Probable histidine--tRNA ligase, cytoplasmic (430 aa).

This sequence belongs to the class-II aminoacyl-tRNA synthetase family.

It localises to the cytoplasm. The enzyme catalyses tRNA(His) + L-histidine + ATP = L-histidyl-tRNA(His) + AMP + diphosphate + H(+). In Vairimorpha ceranae (strain BRL01) (Microsporidian parasite), this protein is Probable histidine--tRNA ligase, cytoplasmic.